Here is a 507-residue protein sequence, read N- to C-terminus: ATP synthase subunit alpha, chloroplastic (507 aa).

170-177 (GDRQTGKT) is a binding site for ATP.

The protein belongs to the ATPase alpha/beta chains family. As to quaternary structure, F-type ATPases have 2 components, CF(1) - the catalytic core - and CF(0) - the membrane proton channel. CF(1) has five subunits: alpha(3), beta(3), gamma(1), delta(1), epsilon(1). CF(0) has four main subunits: a, b, b' and c.

It localises to the plastid. The protein localises to the chloroplast thylakoid membrane. It carries out the reaction ATP + H2O + 4 H(+)(in) = ADP + phosphate + 5 H(+)(out). In terms of biological role, produces ATP from ADP in the presence of a proton gradient across the membrane. The alpha chain is a regulatory subunit. The sequence is that of ATP synthase subunit alpha, chloroplastic from Anthoceros angustus (Hornwort).